We begin with the raw amino-acid sequence, 253 residues long: uncharacterized protein (253 aa).

This sequence belongs to the A.longa ORF167/ORF288 family.

Its subcellular location is the plastid. This is an uncharacterized protein from Euglena longa (Euglenophycean alga).